A 582-amino-acid chain; its full sequence is ATP-dependent lipid A-core flippase (582 aa).

Transmembrane regions (helical) follow at residues 25-45 (WFMLVISVIGYALYAGAQAGA), 64-84 (VLIVSIAPLVLVLFQGLGQFM), 142-162 (AIIVIIREGLTVIGLFSFLLW), 165-185 (WKLTLILVTVVPLIALVMNIT), and 253-273 (VIVQLFVAVGIGFITYLYIHL). The ABC transmembrane type-1 domain maps to 29–309 (VISVIGYALY…LTDVNVKVQR (281 aa)). The 236-residue stretch at 342 to 577 (IDFEGVSFGY…NGLYTQMYRM (236 aa)) folds into the ABC transporter domain. ATP is bound at residue 375-382 (GRSGAGKS).

It belongs to the ABC transporter superfamily. Lipid exporter (TC 3.A.1.106) family. Homodimer.

Its subcellular location is the cell inner membrane. The enzyme catalyses ATP + H2O + lipid A-core oligosaccharideSide 1 = ADP + phosphate + lipid A-core oligosaccharideSide 2.. In terms of biological role, involved in lipopolysaccharide (LPS) biosynthesis. Translocates lipid A-core from the inner to the outer leaflet of the inner membrane. Transmembrane domains (TMD) form a pore in the inner membrane and the ATP-binding domain (NBD) is responsible for energy generation. In Alcanivorax borkumensis (strain ATCC 700651 / DSM 11573 / NCIMB 13689 / SK2), this protein is ATP-dependent lipid A-core flippase.